Consider the following 602-residue polypeptide: Bifunctional lycopene cyclase/phytoene synthase (602 aa).

The lycopene beta-cyclase stretch occupies residues 1–241; sequence MYDYAFVHLK…IVGGMAAFDQ (241 aa). 7 helical membrane-spanning segments follow: residues 6 to 26, 30 to 50, 76 to 96, 118 to 138, 146 to 166, 168 to 188, and 230 to 250; these read FVHL…AYPI, IHLI…LPWD, FEEL…YILF, VVKV…WNAA, YLGL…TLAG, FILS…TFYL, and MLIV…YAFP. Residues 248 to 602 are phytoene synthase; that stretch reads AFPTLFPKVN…STLLRALYEQ (355 aa).

In the N-terminal section; belongs to the lycopene beta-cyclase family. It in the C-terminal section; belongs to the phytoene/squalene synthase family.

The protein resides in the membrane. The enzyme catalyses all-trans-lycopene = gamma-carotene. It catalyses the reaction gamma-carotene = all-trans-beta-carotene. It carries out the reaction 2 (2E,6E,10E)-geranylgeranyl diphosphate = 15-cis-phytoene + 2 diphosphate. The protein operates within carotenoid biosynthesis; beta-carotene biosynthesis. It participates in carotenoid biosynthesis; phytoene biosynthesis; all-trans-phytoene from geranylgeranyl diphosphate: step 1/1. Bifunctional enzyme that catalyzes the reactions from geranylgeranyl diphosphate to phytoene (phytoene synthase) and from lycopene to beta-carotene via the intermediate gamma-carotene and from 3,4-didehydrolycopene to torulene (lycopene cyclase). Torulene is further processed to the acidic carotenoid neurosporaxanthin. The cyclase preferentially catalyzes single cyclizations at only one end of the substrate to produce monocyclic carotenoids. Neurosporaxanthin is synthesized from geranyl-geranyl pyrophosphate (GGPP) through several enzymatic activities. Phytoene synthase activity performed by the bifunctional enzyme al-2 first produces phytoene from geranyl-geranyl pyrophosphate (GGPP). The phytoene dehydrogenase al-1 then introduces 5 desaturations to lead to 3,4-didehydrolycopene via the intermediates phytofluene, zeta-carotene, neurosporene and lycopene. Al-2 cyclase activity then converts 3,4-didehydrolycopene into torulene. Al-2 can also convet lycopene into gamma-carotene which in turn is converted to beta-carotene by an additional al-2 cyclization reaction. Torulene is the substrate of the dioxidase cao-2 that breaks the molecule, removing five carbon atoms to yield beta-apo-4'-carotenal, whereas the aldehyde dehydrogenase ylo-1 mediates the last step by converting beta-apo-4'-carotenal into neurosporaxanthin. This is Bifunctional lycopene cyclase/phytoene synthase from Neurospora crassa (strain ATCC 24698 / 74-OR23-1A / CBS 708.71 / DSM 1257 / FGSC 987).